Here is a 534-residue protein sequence, read N- to C-terminus: Glucans biosynthesis protein D (534 aa).

The tat-type signal signal peptide spans 1 to 28 (MYRRDFLKSVTAAWVAFGLPNPLGGAFA).

Belongs to the OpgD/OpgG family. Predicted to be exported by the Tat system. The position of the signal peptide cleavage has not been experimentally proven.

Its subcellular location is the periplasm. Its pathway is glycan metabolism; osmoregulated periplasmic glucan (OPG) biosynthesis. Functionally, probably involved in the control of the structural glucose backbone of osmoregulated periplasmic glucans (OPGs). The chain is Glucans biosynthesis protein D from Xylella fastidiosa (strain M23).